A 343-amino-acid polypeptide reads, in one-letter code: 3-dehydroquinate synthase (343 aa).

NAD(+)-binding positions include 61 to 66, 95 to 96, 119 to 120, Lys-132, Lys-141, Asn-142, and 159 to 162; these read SGEKYK, GV, TT, and FLKT. Positions 174, 231, and 248 each coordinate Zn(2+).

The protein belongs to the sugar phosphate cyclases superfamily. Dehydroquinate synthase family. As to quaternary structure, homodimer. Requires NAD(+) as cofactor. It depends on Co(2+) as a cofactor. Zn(2+) is required as a cofactor.

The protein resides in the cytoplasm. The catalysed reaction is 7-phospho-2-dehydro-3-deoxy-D-arabino-heptonate = 3-dehydroquinate + phosphate. The protein operates within metabolic intermediate biosynthesis; chorismate biosynthesis; chorismate from D-erythrose 4-phosphate and phosphoenolpyruvate: step 2/7. Functionally, catalyzes the conversion of 3-deoxy-D-arabino-heptulosonate 7-phosphate (DAHP) to dehydroquinate (DHQ). This Helicobacter pylori (strain ATCC 700392 / 26695) (Campylobacter pylori) protein is 3-dehydroquinate synthase.